Reading from the N-terminus, the 898-residue chain is MFKYNRSLCSSALIAKSQIRFYRLKRAPLNYASHIPEVLNKTIIGPDEPEKCLILKGKTSEEIENNLLSNKKFQEINPLDTIQETFIQYLKFCNETNFKRSNKNLNRLKKTLESKDSNSTVKINAVFNYLLEECDLEIKRLNTTGQTQVYNEEKGNEDDLEQSIMNDIFRSAQEQFEDQEGHIPLRSTSFLLEILKSFNERFNGIIKPKESITEMVTFSQLAQAFEVVKLIPVQEMKEKGIYLVGNLLYGTGKVRLDPINESFYIESLLVFGNYKAAYSLFITNKDKVNERWWNELGLMITLRSNHLRNFRKLLAETDAKYSTKYSYLSPRVTKLSIRKYLSIGNVTEANILTDRFIKLVEEVGIIRMKDEQEELPTGVKNFQNEKHATEFLNELEIPSDHDYISIVDFHLYKRNIPMAAQLISKYMEIPGTTQEDAAFLLVKTKLNMLKDFEKLRNIFAQNKDYVVPENNVKMLQEAFESVITKYNTNSPIYNELLFENVSALTKSIVLTDFLEEFITKQASGQWMELNSVSRSRKFNGLLNILLGTGEEEKAYNILKKLEEASKKSKTDPDLLYNQFYSEVNAYHYAKFVEFYSLQIQNMKAQNTPSFRKKEFKQKVKSLLKRMQESEVIPNAVFLREILNFYDSMYDFNSSFEIINPLLESKQQVSSESSLSTSNPCRFYNRRIITKPLYHKIWSVYCHYYHVLQNNSRILSKKSSIVKKLIKRQIKIHPTCHPRVLFQMTAENGEILPDKTFSKLIVSTFMKSGDLEAIPAILTFLTKKFDLNIDYDLSMYILKGLKRQYLRDISNISKDACEYKLRKAELMNNESILKNIPQGTNQENTISHLIREILIFIKWKEKSDCSTFLMVEDAFKELGTEFTLLEELIEDVNKLKIKA.

A mitochondrion-targeting transit peptide spans 1-31 (MFKYNRSLCSSALIAKSQIRFYRLKRAPLNY).

It localises to the mitochondrion. The chain is Protein SOV1, mitochondrial (SOV1) from Saccharomyces cerevisiae (strain ATCC 204508 / S288c) (Baker's yeast).